The chain runs to 459 residues: Alcohol acyl transferase 2 (459 aa).

Active-site proton acceptor residues include histidine 164 and asparagine 385.

The protein belongs to the plant acyltransferase family. In terms of tissue distribution, highly expressed in the cortex and skin of ripe fruit.

In terms of biological role, involved in the biosynthesis of volatile esters which confer ripe apple fruit flavor. Alcohol acyl transferase that can use a wide range of alcohols as substrate to produce esters. This is Alcohol acyl transferase 2 from Malus domestica (Apple).